The sequence spans 175 residues: Interleukin-10 (175 aa).

The N-terminal stretch at 1–18 is a signal peptide; the sequence is MPSSALLYCLIFLAGVAA. 2 disulfides stabilise this stretch: C26–C122 and C76–C128. The N-linked (GlcNAc...) asparagine glycan is linked to N130.

The protein belongs to the IL-10 family. As to quaternary structure, homodimer. Interacts with IL10RA and IL10RB.

It localises to the secreted. Its function is as follows. Major immune regulatory cytokine that acts on many cells of the immune system where it has profound anti-inflammatory functions, limiting excessive tissue disruption caused by inflammation. Mechanistically, IL10 binds to its heterotetrameric receptor comprising IL10RA and IL10RB leading to JAK1 and STAT2-mediated phosphorylation of STAT3. In turn, STAT3 translocates to the nucleus where it drives expression of anti-inflammatory mediators. Targets antigen-presenting cells (APCs) such as macrophages and monocytes and inhibits their release of pro-inflammatory cytokines including granulocyte-macrophage colony-stimulating factor /GM-CSF, granulocyte colony-stimulating factor/G-CSF, IL-1 alpha, IL-1 beta, IL-6, IL-8 and TNF-alpha. Also interferes with antigen presentation by reducing the expression of MHC-class II and co-stimulatory molecules, thereby inhibiting their ability to induce T cell activation. In addition, controls the inflammatory response of macrophages by reprogramming essential metabolic pathways including mTOR signaling. This chain is Interleukin-10 (IL10), found in Sus scrofa (Pig).